We begin with the raw amino-acid sequence, 340 residues long: Uroporphyrinogen decarboxylase (340 aa).

Residues 21-25 (RQAGR), Phe40, Asp71, Tyr147, Ser202, and His316 contribute to the substrate site.

This sequence belongs to the uroporphyrinogen decarboxylase family. In terms of assembly, homodimer.

The protein localises to the cytoplasm. It carries out the reaction uroporphyrinogen III + 4 H(+) = coproporphyrinogen III + 4 CO2. The protein operates within porphyrin-containing compound metabolism; protoporphyrin-IX biosynthesis; coproporphyrinogen-III from 5-aminolevulinate: step 4/4. Its function is as follows. Catalyzes the decarboxylation of four acetate groups of uroporphyrinogen-III to yield coproporphyrinogen-III. This is Uroporphyrinogen decarboxylase from Helicobacter hepaticus (strain ATCC 51449 / 3B1).